We begin with the raw amino-acid sequence, 477 residues long: Delayed-rectifier potassium channel regulatory subunit KCNS2 (477 aa).

At 1–184 (MTGQSLWDVS…LALDNPGYSV (184 aa)) the chain is on the cytoplasmic side. Residues 185–206 (LSRVFSILSILVVMGSIITMCL) traverse the membrane as a helical segment. Residues 207-225 (NSLPDFQIPDSQGNPGEDP) are Extracellular-facing. Residues 226–248 (RFEIVEHFGIAWFTFELVARFAV) form a helical membrane-spanning segment. Residues 249–259 (APDFLKFFKNA) lie on the Cytoplasmic side of the membrane. The chain crosses the membrane as a helical span at residues 260-280 (LNLIDLMSIVPFYITLVVNLV). Residues 281–290 (VESTPTLANL) lie on the Extracellular side of the membrane. Residues 291-311 (GRVAQVLRLMRIFRILKLARH) form a helical; Voltage-sensor membrane-spanning segment. The Cytoplasmic portion of the chain corresponds to 312–326 (STGLRSLGATLKYSY). A helical transmembrane segment spans residues 327–348 (KEVGLLLLYLSVGISIFSVVAY). Over 349 to 361 (TIEKEENEGLATI) the chain is Extracellular. Positions 362–373 (PACWWWATVSMT) form an intramembrane region, helical. The Selectivity filter signature appears at 374-379 (TVGYGD). An intramembrane segment occupies 374–381 (TVGYGDVV). Residues 382–388 (PGTTAGK) lie on the Extracellular side of the membrane. The helical transmembrane segment at 389–417 (LTASACILAGILVVVLPITLIFNKFSHFY) threads the bilayer. The Cytoplasmic portion of the chain corresponds to 418–477 (RRQKQLESAMRSCDFGDGMKEVPSVNLRDYYAHKVKSLMASLTNMSRSSPSELSLNDSLR).

The protein belongs to the potassium channel family. S (TC 1.A.1.2) subfamily. Kv9.2/KCNS2 sub-subfamily. As to quaternary structure, heterotetramer with KCNB1 and KCNB2. Does not form homomultimers.

It is found in the cell membrane. Potassium channel regulatory subunit that modulate the delayed rectifier voltage-gated potassium channel activity of KCNB1 and KCNB2 by altering their kinetics, expression levels, and shifting the half-inactivation potential to more polarized values. While it does not form functional channels on its own, it can form functional heterotetrameric channels with KCNB1 and KCNB2. Each regulatory subunit has unique regulatory properties that can lead to extensive inhibition, significant changes in kinetics, and/or substantial shifts in the voltage dependencies of the inactivation process. The chain is Delayed-rectifier potassium channel regulatory subunit KCNS2 from Homo sapiens (Human).